The chain runs to 97 residues: YcgL domain-containing protein Pmen_1774 (97 aa).

The 85-residue stretch at 3-87 (RICSIYKSPR…PEEDYIQHLP (85 aa)) folds into the YcgL domain.

This chain is YcgL domain-containing protein Pmen_1774, found in Ectopseudomonas mendocina (strain ymp) (Pseudomonas mendocina).